The primary structure comprises 177 residues: Ribonuclease H (177 aa).

In terms of domain architecture, RNase H type-1 spans M1–A142. Mg(2+) is bound by residues D10, E48, D70, and D134. Residues G126 to R138 are compositionally biased toward basic and acidic residues. Residues G126–Y177 are disordered.

Belongs to the RNase H family. Monomer. The cofactor is Mg(2+).

It localises to the cytoplasm. The enzyme catalyses Endonucleolytic cleavage to 5'-phosphomonoester.. Functionally, endonuclease that specifically degrades the RNA of RNA-DNA hybrids. The chain is Ribonuclease H from Mesorhizobium japonicum (strain LMG 29417 / CECT 9101 / MAFF 303099) (Mesorhizobium loti (strain MAFF 303099)).